The chain runs to 278 residues: Urease accessory protein UreD (278 aa).

It belongs to the UreD family. UreD, UreF and UreG form a complex that acts as a GTP-hydrolysis-dependent molecular chaperone, activating the urease apoprotein by helping to assemble the nickel containing metallocenter of UreC. The UreE protein probably delivers the nickel.

The protein resides in the cytoplasm. Required for maturation of urease via the functional incorporation of the urease nickel metallocenter. The polypeptide is Urease accessory protein UreD (Deinococcus radiodurans (strain ATCC 13939 / DSM 20539 / JCM 16871 / CCUG 27074 / LMG 4051 / NBRC 15346 / NCIMB 9279 / VKM B-1422 / R1)).